The primary structure comprises 346 residues: Ephrin-B1 (346 aa).

Residues 1–27 form the signal peptide; it reads MARPGQRWLGKWLVAMVVWALCRLATP. The Extracellular portion of the chain corresponds to 28–237; the sequence is LAKNLEPVSW…GDPDGFFNSK (210 aa). Residues 30–164 enclose the Ephrin RBD domain; it reads KNLEPVSWSS…TRTMKIIMKV (135 aa). Cystine bridges form between Cys64-Cys101 and Cys89-Cys153. N-linked (GlcNAc...) asparagine glycosylation occurs at Asn139. The tract at residues 169–228 is disordered; sequence NAVTPEQLTTSRPSKEADNTVKMATQAPGSRGSLGDSDGKHETVNQEEKSGPGASGGSSG. The segment covering 205–218 has biased composition (basic and acidic residues); the sequence is SDGKHETVNQEEKS. The chain crosses the membrane as a helical span at residues 238–258; sequence VALFAAVGAGCVIFLLIIIFL. Residues 259-346 are Cytoplasmic-facing; the sequence is TVLLLKLRKR…QSPANIYYKV (88 aa). A Nuclear localization signal motif is present at residues 260-273; it reads VLLLKLRKRHRKHT. The tract at residues 263 to 294 is interaction with ZHX2; it reads LKLRKRHRKHTQQRAAALSLSTLASPKGGSGT. Residues Ser281 and Ser287 each carry the phosphoserine modification. Positions 344–346 match the PDZ-binding motif; sequence YKV.

This sequence belongs to the ephrin family. In terms of assembly, interacts (via PDZ-binding motif) with GRIP1 and GRIP2 (via PDZ domain 6). Interacts with TLE1. The intracellular domain peptide interacts with ZHX2; the interaction enhances ZHX2 transcriptional repression activity. Inducible phosphorylation of tyrosine residues in the cytoplasmic domain. In terms of processing, proteolytically processed. The ectodomain is cleaved, probably by a metalloprotease, to produce a membrane-tethered C-terminal fragment. This fragment is then further processed by the gamma-secretase complex to yield a soluble intracellular domain peptide which can translocate to the nucleus. The intracellular domain peptide is highly labile suggesting that it is targeted for degradation by the proteasome. Widely expressed. Detected in both neuronal and non-neuronal tissues. Seems to have particularly strong expression in retina, sciatic nerve, heart and spinal cord.

It localises to the cell membrane. Its subcellular location is the membrane raft. The protein localises to the nucleus. Cell surface transmembrane ligand for Eph receptors, a family of receptor tyrosine kinases which are crucial for migration, repulsion and adhesion during neuronal, vascular and epithelial development. Binding to Eph receptors residing on adjacent cells leads to contact-dependent bidirectional signaling into neighboring cells. Shows high affinity for the receptor tyrosine kinase EPHB1/ELK. Can also bind EPHB2 and EPHB3. Binds to, and induces collapse of, commissural axons/growth cones in vitro. May play a role in constraining the orientation of longitudinally projecting axons. This chain is Ephrin-B1 (EFNB1), found in Homo sapiens (Human).